The following is a 976-amino-acid chain: Dibasic-processing endoprotease (976 aa).

The N-terminal stretch at 1–17 (MLRKFILGLLLASQAVA) is a signal peptide. The N-linked (GlcNAc...) asparagine glycan is linked to asparagine 156. Residues 172–212 (AEEAQKAQDDKGDKKEDQKDDKKEGQEAQKEGDKEDNKGDD) show a composition bias toward basic and acidic residues. Residues 172–246 (AEEAQKAQDD…VQWKPVDESM (75 aa)) form a disordered region. A compositionally biased stretch (acidic residues) spans 213 to 231 (KEDGEEDDDDDEDEDDDDA). Residues 277–595 (QWYLHNVHKA…YGKLDASKIV (319 aa)) enclose the Peptidase S8 domain. Asparagine 291 and asparagine 299 each carry an N-linked (GlcNAc...) asparagine glycan. Aspartate 311 functions as the Charge relay system in the catalytic mechanism. A glycan (N-linked (GlcNAc...) asparagine) is linked at asparagine 336. Residues histidine 349 and serine 528 each act as charge relay system in the active site. A helical membrane pass occupies residues 524 to 544 (HGGTSAAAPLAAGVFALALSV). The P/Homo B domain maps to 604–737 (VNNQTSFHSE…QLNVFGEQKD (134 aa)). N-linked (GlcNAc...) asparagine glycosylation is present at asparagine 606. The segment at 733 to 848 (GEQKDKREEN…SDSHTSWWPD (116 aa)) is disordered. The span at 734-830 (EQKDKREENK…EEKPEEKPVD (97 aa)) shows a compositional bias: basic and acidic residues. A helical transmembrane segment spans residues 855-875 (AWLYGAVLLVGGFIAVIGIYA). A glycan (N-linked (GlcNAc...) asparagine) is linked at asparagine 886. The tract at residues 914-976 (PEDTHRRSGD…RDNDRQNLLG (63 aa)) is disordered. 2 stretches are compositionally biased toward basic and acidic residues: residues 915–928 (EDTH…DRLY) and 940–976 (MFRI…NLLG).

It belongs to the peptidase S8 family. Furin subfamily.

It is found in the membrane. The protein is Dibasic-processing endoprotease (XPR6) of Yarrowia lipolytica (strain CLIB 122 / E 150) (Yeast).